We begin with the raw amino-acid sequence, 150 residues long: Small ribosomal subunit protein eS19S (150 aa).

Belongs to the eukaryotic ribosomal protein eS19 family.

The chain is Small ribosomal subunit protein eS19S (RPS19S) from Ascaris suum (Pig roundworm).